Consider the following 95-residue polypeptide: Translation initiation factor 1A (95 aa).

An S1-like domain is found at 6 to 80; it reads SRKNLRMPEE…EKADITWRYE (75 aa).

This sequence belongs to the eIF-1A family.

Functionally, seems to be required for maximal rate of protein biosynthesis. Enhances ribosome dissociation into subunits and stabilizes the binding of the initiator Met-tRNA(I) to 40 S ribosomal subunits. The protein is Translation initiation factor 1A of Haloarcula marismortui (strain ATCC 43049 / DSM 3752 / JCM 8966 / VKM B-1809) (Halobacterium marismortui).